The primary structure comprises 481 residues: MRWLWPLAVSLAVILAVGLSRVSGGAPLHLGRHRAETQEQQSRSKRGTEDEEAKGVQQYVPEEWAEYPRPIHPAGLQPTKPLVATSPNPGKDGGTPDSGQELRGNLTGAPGQRLQIQNPLYPVTESSYSAYAIMLLALVVFAVGIVGNLSVMCIVWHSYYLKSAWNSILASLALWDFLVLFFCLPIVIFNEITKQRLLGDVSCRAVPFMEVSSLGVTTFSLCALGIDRFHVATSTLPKVRPIERCQSILAKLAVIWVGSMTLAVPELLLWQLAQEPAPTMGTLDSCIMKPSASLPESLYSLVMTYQNARMWWYFGCYFCLPILFTVTCQLVTWRVRGPPGRKSECRASKHEQCESQLNSTVVGLTVVYAFCTLPENVCNIVVAYLSTELTRQTLDLLGLINQFSTFFKGAITPVLLLCICRPLGQAFLDCCCCCCCEECGGASEASAANGSDNKLKTEVSSSIYFHKPRESPPLLPLGTPC.

A signal peptide spans 1–25; it reads MRWLWPLAVSLAVILAVGLSRVSGG. 2 disordered regions span residues 26–58 and 70–108; these read APLH…GVQQ and PIHP…NLTG. At 26–134 the chain is on the extracellular side; the sequence is APLHLGRHRA…ESSYSAYAIM (109 aa). O-linked (GalNAc...) threonine glycans are attached at residues Thr-79 and Thr-85. O-linked (GalNAc...) serine glycosylation occurs at Ser-86. The O-linked (GalNAc...) threonine glycan is linked to Thr-95. A glycan (N-linked (GlcNAc...) asparagine) is linked at Asn-105. The O-linked (GalNAc...) threonine glycan is linked to Thr-107. A helical membrane pass occupies residues 135 to 155; the sequence is LLALVVFAVGIVGNLSVMCIV. The Cytoplasmic segment spans residues 156–167; that stretch reads WHSYYLKSAWNS. A helical transmembrane segment spans residues 168-188; the sequence is ILASLALWDFLVLFFCLPIVI. Residues 189 to 205 lie on the Extracellular side of the membrane; it reads FNEITKQRLLGDVSCRA. A disulfide bond links Cys-203 and Cys-286. The helical transmembrane segment at 206 to 226 threads the bilayer; it reads VPFMEVSSLGVTTFSLCALGI. The Cytoplasmic segment spans residues 227–251; it reads DRFHVATSTLPKVRPIERCQSILAK. Residues 252 to 272 form a helical membrane-spanning segment; it reads LAVIWVGSMTLAVPELLLWQL. At 273 to 310 the chain is on the extracellular side; sequence AQEPAPTMGTLDSCIMKPSASLPESLYSLVMTYQNARM. A helical transmembrane segment spans residues 311-331; sequence WWYFGCYFCLPILFTVTCQLV. Residues 332–361 are Cytoplasmic-facing; it reads TWRVRGPPGRKSECRASKHEQCESQLNSTV. The helical transmembrane segment at 362–382 threads the bilayer; the sequence is VGLTVVYAFCTLPENVCNIVV. The Extracellular portion of the chain corresponds to 383 to 398; sequence AYLSTELTRQTLDLLG. The helical transmembrane segment at 399 to 419 threads the bilayer; that stretch reads LINQFSTFFKGAITPVLLLCI. Over 420–481 the chain is Cytoplasmic; that stretch reads CRPLGQAFLD…PPLLPLGTPC (62 aa). The residue at position 471 (Ser-471) is a Phosphoserine. A Phosphothreonine modification is found at Thr-479.

This sequence belongs to the G-protein coupled receptor 1 family. Interacts with the PTCH1 receptor. O-glycosylated. In terms of processing, undergoes metalloprotease-mediated cleavage which reduces its constitutive activity. Post-translationally, ubiquitinated. In terms of tissue distribution, expressed in primary cortical astrocytes (at protein level). Expressed in the central nervous system.

The protein resides in the cell membrane. It localises to the cell projection. It is found in the cilium membrane. In terms of biological role, G-protein coupled receptor. Has been shown to bind the neuroprotective and glioprotective factor prosaposin (PSAP), leading to endocytosis followed by an ERK phosphorylation cascade. However, other studies have shown that prosaposin does not increase activity. It has been suggested that GPR37L1 is a constitutively active receptor which signals through the guanine nucleotide-binding protein G(s) subunit alpha. Participates in the regulation of postnatal cerebellar development by modulating the Shh pathway. Regulates baseline blood pressure in females and protects against cardiovascular stress in males. Mediates inhibition of astrocyte glutamate transporters and reduction in neuronal N-methyl-D-aspartate receptor activity. The protein is G-protein coupled receptor 37-like 1 (GPR37L1) of Homo sapiens (Human).